The following is a 77-amino-acid chain: Translation initiation factor IF-1, chloroplastic (77 aa).

Residues 1-72 (MKKQNLIEME…TKGRITYRLR (72 aa)) form the S1-like domain.

The protein belongs to the IF-1 family. As to quaternary structure, component of the 30S ribosomal translation pre-initiation complex which assembles on the 30S ribosome in the order IF-2 and IF-3, IF-1 and N-formylmethionyl-tRNA(fMet); mRNA recruitment can occur at any time during PIC assembly.

It localises to the plastid. The protein resides in the chloroplast. One of the essential components for the initiation of protein synthesis. Stabilizes the binding of IF-2 and IF-3 on the 30S subunit to which N-formylmethionyl-tRNA(fMet) subsequently binds. Helps modulate mRNA selection, yielding the 30S pre-initiation complex (PIC). Upon addition of the 50S ribosomal subunit IF-1, IF-2 and IF-3 are released leaving the mature 70S translation initiation complex. The sequence is that of Translation initiation factor IF-1, chloroplastic from Zygnema circumcarinatum (Green alga).